A 93-amino-acid chain; its full sequence is Protein salt-induced and EIN3/EIL1-dependent 1 (93 aa).

Over residues 23–36 the composition is skewed to low complexity; the sequence is SSLLTESSSSSLCS. The tract at residues 23–46 is disordered; sequence SSLLTESSSSSLCSEEAEGGGGEA.

Its activity is regulated as follows. Triggered by EIN3. Involved in ethylene-dependent salt stress responses by reducing reactive oxygen species (ROS) accumulation. The sequence is that of Protein salt-induced and EIN3/EIL1-dependent 1 from Arabidopsis thaliana (Mouse-ear cress).